A 436-amino-acid chain; its full sequence is MQVSVESTSALERRLTIGVPAERIETEVNKRLQQTARRAKIPGFRPGKVPMSVIRQRYEESARQEALGELIQASFYEAVVEQKLKPAGAPSVEPKVFEKGKDLEYVATFEVYPEFEITGLESIAVERLQAEVAESDVDNMLEILRKQNTHYKQVEREARDGDQLNIDFVGKVDGEAFAGGSAKGTLLVLGSGRMIEGFEAGLVGAKAGEERVLSLTFPADYQNLDLAGKAAEFAVTVNSVSEAELPELNADFFSLFGINESSLEAFRAEVGKNMERELRQAIKSKVKTQVMDGLLAANPVEVPKALIENEVNRLRVQAVQQFGGNIKPEQLPADLFQDQAKRRVTLGLIVAEMVKQFDLKPDESKVKTLIEEIASAYQEPEQVVAWYYGNEQQLSEVRSVVLEEQVVDTVLQKANVTDKAVSYEEAVKPAEAPQAA.

The 86-residue stretch at 161 to 246 folds into the PPIase FKBP-type domain; that stretch reads GDQLNIDFVG…VNSVSEAELP (86 aa).

This sequence belongs to the FKBP-type PPIase family. Tig subfamily.

It localises to the cytoplasm. It catalyses the reaction [protein]-peptidylproline (omega=180) = [protein]-peptidylproline (omega=0). Its function is as follows. Involved in protein export. Acts as a chaperone by maintaining the newly synthesized protein in an open conformation. Functions as a peptidyl-prolyl cis-trans isomerase. The polypeptide is Trigger factor (Azotobacter vinelandii (strain DJ / ATCC BAA-1303)).